A 217-amino-acid polypeptide reads, in one-letter code: NADPH-dependent 3-demethoxyubiquinone 3-hydroxylase, mitochondrial (217 aa).

2 tandem repeats follow at residues 49–130 (IIER…SALM) and 131–217 (GKEA…STRV). The segment at 49–217 (IIERIIRVDH…KTAIWLSTRV (169 aa)) is 2 X approximate tandem repeats. Arginine 52 contributes to the NADH binding site. Fe cation-binding residues include glutamate 61, glutamate 91, histidine 94, glutamate 143, glutamate 178, and histidine 181. Residue arginine 216 coordinates NADH.

This sequence belongs to the COQ7 family. In terms of assembly, component of a multi-subunit COQ enzyme complex. Fe cation is required as a cofactor.

The protein localises to the mitochondrion inner membrane. It catalyses the reaction a 5-methoxy-2-methyl-3-(all-trans-polyprenyl)benzoquinone + NADH + O2 = a 3-demethylubiquinone + NAD(+) + H2O. The protein operates within cofactor biosynthesis; ubiquinone biosynthesis. Its function is as follows. Catalyzes the hydroxylation of the 5-methoxy-2-methyl-3-(all-trans-polyprenyl)benzoquinone at the C6 position and participates in the biosynthesis of ubiquinone. Catalyzes the reaction through a substrate-mediated reduction pathway, whereby NADH shuttles electrons to 5-methoxy-2-methyl-3-(all-trans-decaprenyl)benzoquinone, which then transfers the electrons to the two Fe(3+) centers. The binding of 5-methoxy-2-methyl-3-(all-trans-polyprenyl)benzoquinone (DMQn) mediates reduction of the diiron center by nicotinamide adenine dinucleotide (NADH) and initiates oxygen activation for subsequent DMQ hydroxylation. Also has a structural role in the COQ enzyme complex, stabilizing other COQ polypeptides. The polypeptide is NADPH-dependent 3-demethoxyubiquinone 3-hydroxylase, mitochondrial (Dictyostelium discoideum (Social amoeba)).